Here is a 445-residue protein sequence, read N- to C-terminus: Tubulin beta-1 chain (445 aa).

Positions 11, 69, 138, 142, 143, 144, 204, and 226 each coordinate GTP. Glu-69 contributes to the Mg(2+) binding site. Positions 426 to 445 (QDATAEDEEEYEDEEEEMAA) are disordered. A compositionally biased stretch (acidic residues) spans 429 to 445 (TAEDEEEYEDEEEEMAA).

It belongs to the tubulin family. In terms of assembly, dimer of alpha and beta chains. A typical microtubule is a hollow water-filled tube with an outer diameter of 25 nm and an inner diameter of 15 nM. Alpha-beta heterodimers associate head-to-tail to form protofilaments running lengthwise along the microtubule wall with the beta-tubulin subunit facing the microtubule plus end conferring a structural polarity. Microtubules usually have 13 protofilaments but different protofilament numbers can be found in some organisms and specialized cells. It depends on Mg(2+) as a cofactor.

It localises to the cytoplasm. The protein localises to the cytoskeleton. In terms of biological role, tubulin is the major constituent of microtubules, a cylinder consisting of laterally associated linear protofilaments composed of alpha- and beta-tubulin heterodimers. Microtubules grow by the addition of GTP-tubulin dimers to the microtubule end, where a stabilizing cap forms. Below the cap, tubulin dimers are in GDP-bound state, owing to GTPase activity of alpha-tubulin. This is Tubulin beta-1 chain (TUBB1) from Eleusine indica (Goosegrass).